The sequence spans 590 residues: Keratin, type II cytoskeletal 5 (590 aa).

The span at 1-18 shows a compositional bias: low complexity; sequence MSRQSSVSFRSGGSRSFS. Positions 1 to 20 are disordered; sequence MSRQSSVSFRSGGSRSFSTA. Residues 1-167 are head; the sequence is MSRQSSVSFR…DPSIQRVRTE (167 aa). Residues Ser5, Ser8, Ser16, and Ser21 each carry the phosphoserine modification. The residue at position 24 (Thr24) is a Phosphothreonine; by CDK1. A phosphoserine mark is found at Ser26, Ser36, Ser50, Ser64, Ser71, Ser75, and Ser82. The residue at position 151 (Thr151) is a Phosphothreonine; by CDK1. A coil 1A region spans residues 168 to 203; that stretch reads EREQIKTLNNKFASFIDKVRFLEQQNKVLDTKWTLL. The region spanning 168-481 is the IF rod domain; that stretch reads EREQIKTLNN…KLLEGEECRL (314 aa). Residues 204–222 form a linker 1 region; it reads QEQGTKTVRQNLEPLFEQY. The tract at residues 223-315 is coil 1B; it reads INNLRRQLDS…FFDAELSQMQ (93 aa). Residues 316–338 are linker 12; it reads THVSDTSVVLSMDNNRNLDLDSI. Positions 339-477 are coil 2; the sequence is IAEVKAQYEE…ATYRKLLEGE (139 aa). Positions 478 to 590 are tail; that stretch reads ECRLSGEGVG…TSSSRKSFKS (113 aa). The disordered stretch occupies residues 566–590; sequence GSGGGSSSSVKFVSTTSSSRKSFKS. The segment covering 572 to 590 has biased composition (low complexity); that stretch reads SSSVKFVSTTSSSRKSFKS.

Belongs to the intermediate filament family. In terms of assembly, heterodimer of a type I and a type II keratin. Heterodimer with type I keratin KRT25 leading to the formation of keratin intermediate filament (KIF) network. Forms a heterodimer (via 2B domains) with KRT14 (via 2B domains). Interacts with PLEC isoform 1C, when in a heterodimer with KRT14. Interacts with TCHP. Interacts with EPPK1. Interacts with AMELX. Interacts with PKP1 (via N-terminus) and PKP2. Phosphorylated by CDK1, AURKB and Rho-kinase, phosphorylation is regulated by the cell cycle. Thr-24 phosphorylation, mediated by CDK1, peaks during prometaphase or metaphase cells with phosphorylated filamentous structures evident throughout the cytoplasm during early mitosis. CDK1 phosphorylates Thr-24 in mitotic cells at the site of injury. Post-translationally, O-glycosylated. In terms of tissue distribution, expressed in corneal epithelium (at protein level). Expressed in keratinocytes (at protein level).

It is found in the cytoplasm. Functionally, required for the formation of keratin intermediate filaments in the basal epidermis and maintenance of the skin barrier in response to mechanical stress. Regulates the recruitment of Langerhans cells to the epidermis, potentially by modulation of the abundance of macrophage chemotactic cytokines, macrophage inflammatory cytokines and CTNND1 localization in keratinocytes. The sequence is that of Keratin, type II cytoskeletal 5 (KRT5) from Homo sapiens (Human).